Reading from the N-terminus, the 354-residue chain is Protein RecA (354 aa).

65-72 (GPESSGKT) contacts ATP.

The protein belongs to the RecA family.

Its subcellular location is the cytoplasm. Its function is as follows. Can catalyze the hydrolysis of ATP in the presence of single-stranded DNA, the ATP-dependent uptake of single-stranded DNA by duplex DNA, and the ATP-dependent hybridization of homologous single-stranded DNAs. It interacts with LexA causing its activation and leading to its autocatalytic cleavage. The polypeptide is Protein RecA (Aeromonas hydrophila subsp. hydrophila (strain ATCC 7966 / DSM 30187 / BCRC 13018 / CCUG 14551 / JCM 1027 / KCTC 2358 / NCIMB 9240 / NCTC 8049)).